The primary structure comprises 434 residues: Asparagine--tRNA ligase (434 aa).

The protein belongs to the class-II aminoacyl-tRNA synthetase family.

It is found in the cytoplasm. The catalysed reaction is tRNA(Asn) + L-asparagine + ATP = L-asparaginyl-tRNA(Asn) + AMP + diphosphate + H(+). The protein is Asparagine--tRNA ligase (asnS) of Pyrococcus furiosus (strain ATCC 43587 / DSM 3638 / JCM 8422 / Vc1).